The chain runs to 2890 residues: Bifunctional DNA-directed RNA polymerase subunit beta-beta' (2890 aa).

The interval 1-1377 (MSKKIPLKNR…DINIFGDDVD (1377 aa)) is DNA-directed RNA polymerase subunit beta. Positions 1384 to 2890 (PIVIKEDDRP…LRTLEDGPKF (1507 aa)) are DNA-directed RNA polymerase subunit beta'. Zn(2+) is bound by residues Cys1449, Cys1451, Cys1465, and Cys1468. Residues Asp1849, Asp1851, and Asp1853 each coordinate Mg(2+). Zn(2+) is bound by residues Cys2179, Cys2253, Cys2260, and Cys2263.

This sequence in the N-terminal section; belongs to the RNA polymerase beta chain family. The protein in the C-terminal section; belongs to the RNA polymerase beta' chain family. The RNAP catalytic core consists of 2 alpha, 1 beta/beta' and 1 omega subunit. When a sigma factor is associated with the core the holoenzyme is formed, which can initiate transcription. The cofactor is Mg(2+). It depends on Zn(2+) as a cofactor.

It carries out the reaction RNA(n) + a ribonucleoside 5'-triphosphate = RNA(n+1) + diphosphate. In terms of biological role, DNA-dependent RNA polymerase catalyzes the transcription of DNA into RNA using the four ribonucleoside triphosphates as substrates. In Helicobacter pylori (strain HPAG1), this protein is Bifunctional DNA-directed RNA polymerase subunit beta-beta' (rpoBC).